The following is a 152-amino-acid chain: Protein-export protein SecB (152 aa).

This sequence belongs to the SecB family. As to quaternary structure, homotetramer, a dimer of dimers. One homotetramer interacts with 1 SecA dimer.

The protein resides in the cytoplasm. Functionally, one of the proteins required for the normal export of preproteins out of the cell cytoplasm. It is a molecular chaperone that binds to a subset of precursor proteins, maintaining them in a translocation-competent state. It also specifically binds to its receptor SecA. The chain is Protein-export protein SecB from Rickettsia typhi (strain ATCC VR-144 / Wilmington).